Reading from the N-terminus, the 123-residue chain is Fluoride-specific ion channel FluC 1 (123 aa).

Helical transmembrane passes span 33 to 53, 59 to 79, and 98 to 118; these read TFLI…LFGV, YGTM…TTFS, and VFYL…GAML. Residues G73 and T76 each contribute to the Na(+) site.

It belongs to the fluoride channel Fluc/FEX (TC 1.A.43) family.

The protein resides in the cell inner membrane. It carries out the reaction fluoride(in) = fluoride(out). Na(+) is not transported, but it plays an essential structural role and its presence is essential for fluoride channel function. Its function is as follows. Fluoride-specific ion channel. Important for reducing fluoride concentration in the cell, thus reducing its toxicity. The chain is Fluoride-specific ion channel FluC 1 from Brucella melitensis biotype 1 (strain ATCC 23456 / CCUG 17765 / NCTC 10094 / 16M).